A 147-amino-acid chain; its full sequence is MRLAIMLSATAVAINFATSSAIDQTKVLVYGTPAHYIHDSAGRRLLRKNEENEETSEERAPNFNLANLNEEMFNVAALTERADAKKLAKQLMGNDKLADAAYMWWQHNRVTLDQIDTFLKLASRKTQGAKYNQIYNSYMMHLGLTGY.

The first 21 residues, 1-21 (MRLAIMLSATAVAINFATSSA), serve as a signal peptide directing secretion. Positions 44–59 (RLLRKNEENEETSEER) match the RxLR-dEER motif. Lysine 48 is subject to N6-acetyllysine. Residues 77–147 (ALTERADAKK…YMMHLGLTGY (71 aa)) form an effector domain region.

It belongs to the RxLR effector family. Forms homodimers via the RxLR-dEER motif. Interacts with host E3 ligase CMPG1. Interacts with host DRP2. In terms of processing, proteolytically cleaved. The cleavage site directly after the RxLR sequence and the high conservation among other effector proteins suggest that the RxLR motif might play a crucial role in the intracellular processing before secretion. Glycosylated. Post-translationally, N-acetylated at Lys-48 after cleavage.

The protein resides in the secreted. It is found in the host cytoplasm. Functionally, multifunctional effector that can suppress host BAK1/SERK3-mediated immunity through at least two different pathways. Manipulates plant immunity by targeting and stabilizing host E3 ligase CMPG1. Preventing the normal 26S proteasome-dependent degradation of potato CMPG1, and thus potentially of its protein substrates in the host cell, further abolishes host cell death during the biotrophic phase of infection. Also associates with and affects the function of the dynamin-related protein 2 (DRP2), a plant GTPase involved in immune receptor-mediated endocytosis. The Avr3a(EM) form evades recognition by R3a, thus does not trigger R3a-mediated hypersensitivity and does not suppress INF1-induced cell death. This Phytophthora infestans (Potato late blight agent) protein is RxLR effector protein Avr3a.